The primary structure comprises 287 residues: X-box-binding protein 1 (287 aa).

One can recognise a bZIP domain in the interval 61 to 117 (EEKMDRRKLKNRVAAQNARDKKKERSAKIEDVMRDLVEENRRLRAENERLRRQNKNL). Positions 63-87 (KMDRRKLKNRVAAQNARDKKKERSA) are disordered. The basic motif stretch occupies residues 63–88 (KMDRRKLKNRVAAQNARDKKKERSAK). Residues 78 to 87 (ARDKKKERSA) are compositionally biased toward basic and acidic residues. The tract at residues 89-117 (IEDVMRDLVEENRRLRAENERLRRQNKNL) is leucine-zipper.

As to quaternary structure, interacts with SUMO-conjugating enzyme ubc-9; the interaction is direct. In terms of processing, sumoylated. Sumoylation may negatively modulate the transcription of genes involved in the ER-stress-response.

The protein localises to the nucleus. Its function is as follows. Required for transcriptional regulation of the unfolded protein response (UPR) in the endoplasmic reticulum (ER) under stressed conditions, acting downstream of ire-1, and also maintaining ER homeostasis via a negative feedback loop, in parallel with ER kinase pek-1. May also regulate Golgi protein trafficking distal to the ER. Protects the host organism from the detrimental effects of mounting an innate immune response to microbes, such as the Gram-negative bacterium P.aeruginosa, probably by modulating the UPR. Plays a role in the unconventional cytoplasmic splicing processing of its own mRNA triggered by the endoplasmic reticulum (ER) transmembrane endoribonuclease ire-1: upon ER stress, the emerging xbp-1 polypeptide chain, as part of a mRNA-ribosome-nascent chain (R-RNC) complex, cotranslationally recruits its own unprocessed mRNA through transient docking to the ER membrane and translational pausing, therefore facilitating efficient ire-1-mediated xbp-1 mRNA isoform 2 production. In terms of biological role, functions as a stress-inducible potent transcriptional activator during endoplasmic reticulum (ER) stress by inducing unfolded protein response (UPR) target genes via binding to the UPR element (UPRE). Plays a role in modulation of the UPR, lipid metabolism, proteostasis, and lifespan. In neurons, rescues stress resistance, increases longevity, and, drives expression of lysosomal genes in the intestine and activates the UPR in distal, non-neuronal cell types through a cell-nonautonomous mechanism. In neurons or intestine, plays a role in protection against proteotoxicity, acting via positive modulation of genes involved in lysosomal function, including lipases and the fatty-acid desaturase fat-6. Protection against proteotoxicity in neurons is dependent upon the transcription factor atf-6. In Caenorhabditis elegans, this protein is X-box-binding protein 1.